Here is a 197-residue protein sequence, read N- to C-terminus: Phosphoheptose isomerase (197 aa).

In terms of domain architecture, SIS spans 36–197 (MVNALLNEGK…IDSQLFGSEE (162 aa)). 51–53 (NGG) is a binding site for substrate. Residues H60 and E64 each coordinate Zn(2+). Residues E64, 93-94 (ND), 119-121 (STS), S124, and Q174 contribute to the substrate site. Zn(2+)-binding residues include Q174 and H182.

It belongs to the SIS family. GmhA subfamily. In terms of assembly, homotetramer. The cofactor is Zn(2+).

It is found in the cytoplasm. The catalysed reaction is 2 D-sedoheptulose 7-phosphate = D-glycero-alpha-D-manno-heptose 7-phosphate + D-glycero-beta-D-manno-heptose 7-phosphate. The protein operates within carbohydrate biosynthesis; D-glycero-D-manno-heptose 7-phosphate biosynthesis; D-glycero-alpha-D-manno-heptose 7-phosphate and D-glycero-beta-D-manno-heptose 7-phosphate from sedoheptulose 7-phosphate: step 1/1. Its function is as follows. Catalyzes the isomerization of sedoheptulose 7-phosphate in D-glycero-D-manno-heptose 7-phosphate. In Pseudomonas syringae pv. syringae (strain B728a), this protein is Phosphoheptose isomerase.